A 1088-amino-acid chain; its full sequence is ATP-dependent helicase/deoxyribonuclease subunit B (1088 aa).

It belongs to the helicase family. AddB/RexB type 2 subfamily. As to quaternary structure, heterodimer of AddA and RexB. Mg(2+) is required as a cofactor.

Its function is as follows. The heterodimer acts as both an ATP-dependent DNA helicase and an ATP-dependent, dual-direction single-stranded exonuclease. Recognizes the chi site generating a DNA molecule suitable for the initiation of homologous recombination. This subunit has 5' -&gt; 3' nuclease activity but not helicase activity. The chain is ATP-dependent helicase/deoxyribonuclease subunit B from Streptococcus suis (strain 98HAH33).